The sequence spans 864 residues: Dynamin-1 (864 aa).

The region spanning Asp28–Pro294 is the Dynamin-type G domain. The tract at residues Gly38–Ser45 is G1 motif. GDP-binding residues include Ser41, Gly43, Lys44, Ser45, Ser46, Arg59, and Gly60. A G2 motif region spans residues Val64–Arg66. At Tyr80 the chain carries Phosphotyrosine. Residue Tyr125 is modified to 3'-nitrotyrosine; alternate. Position 125 is a phosphotyrosine; alternate (Tyr125). Positions Asp136–Gly139 are G3 motif. The segment at Thr205–Asp208 is G4 motif. Lys206, Asp208, Asp211, Asn236, Arg237, and Gln239 together coordinate GDP. The tract at residues Val235 to Ser238 is G5 motif. Phosphoserine occurs at positions 306 and 347. Position 354 is a phosphotyrosine (Tyr354). Residue Ser512 is modified to Phosphoserine. In terms of domain architecture, PH spans Leu519–Val625. Residues Val659 to Val750 form the GED domain. Residues Ser767–Leu864 form a disordered region. The residue at position 774 (Ser774) is a Phosphoserine; by CDK5. Position 778 is a phosphoserine (Ser778). Position 796 is an omega-N-methylarginine (Arg796). Residue Ser822 is modified to Phosphoserine. The span at Pro825–Val843 shows a compositional bias: pro residues. A phosphoserine mark is found at Ser851 and Ser857.

It belongs to the TRAFAC class dynamin-like GTPase superfamily. Dynamin/Fzo/YdjA family. In terms of assembly, homodimer; homodimerization is mediated by the dynamin-type G domain which promotes assembly-stimulated GTPase activity. Homo-tetramer formed from two dimers in the absence of lipid. Oligomerizes into a helical polymer that self-assembles around the vesicle membrane, when associated to the menbrane through lipid binding. Interacts (via C-terminal proline-rich domain (PRD)) with SNX9 (via SH3 domain); this interaction allows regulation of DNM1 self-assembly during late stages of endocytic vesicle formation and supports DNM1's early functions in accelerating clathrin-coated pits (CCPs) maturation in non neuronals cell. Interacts (via C-terminal proline-rich domain (PRD)) with MYO1E (via SH3 domain); this interaction regulates receptor-mediated endocytosis. Interacts with SNX33 (via SH3 domain); this interaction decreases DNM1-dependent endocytosis. Interacts with DIAPH1. Interacts with GRB2 (via SH3 domain); this interaction mediates disassembly of DNM1 polymers, therefore modulates self-assembly. Forms a complex with BIN1 (via SH3 domain) and SH3GL2 (via SH3 domain). Forms a complex with SH3GL2 (via SH3 domain) and AMPH (via SH3 domain). Forms a complex with SH3GL2 (via SH3 domain) and SYNJ1. Interacts with AMPH. Interacts (via C-terminal proline-rich domain (PRD)) with SYT1; this interaction facilitates vesicle fission during clathrin-mediated endocytosis (CME). Interacts (via C-terminal proline-rich domain (PRD)) with PLCG1 (via SH3 domain); this interaction stimulates the release of GDP from DNM1 and enhances DNM1-dependent endocytosis. Interacts with SNPH; this interaction inhibits the binding of DNM1 to AMPH and DNM1-receptor-mediated endocytosis. Interacts with CAV1. Interacts with SH3GLB1 (via SH3 domain). Interacts with PACSIN1 (via SH3 domain), PACSIN2 (via SH3 domain) and PACSIN3 (via SH3 domain). Interacts with UNC119; this interaction decreases DNM1's GTPase activity and affects DNM1's interaction with AMPH. Interacts (GTP-bound form) with DNAJC6; this interaction allows clathrin-coated vesicle (CCV) formation at the plasma membrane. In terms of processing, phosphorylation at Ser-774 by GSK3B/GSK3-beta leads to inactivation of receptor-mediated endocytosis in non-neuronal cells. Dephosphorylation at Ser-774, through the EGFR downstream signaling, leads to activation and regulates early stages of clathrin-mediated endocytosis (CME). Phosphorylated by CDK5 leading to synaptic vesicle endocytosis (SVE) activation. Brain-specific (peripheral sensory neurons).

It is found in the cytoplasmic vesicle. Its subcellular location is the clathrin-coated vesicle. The protein localises to the golgi apparatus. It localises to the cell membrane. The protein resides in the membrane. It is found in the clathrin-coated pit. Its subcellular location is the presynapse. The protein localises to the secretory vesicle. It localises to the chromaffin granule. The enzyme catalyses GTP + H2O = GDP + phosphate + H(+). In terms of biological role, catalyzes the hydrolysis of GTP and utilizes this energy to mediate vesicle scission and participates in many forms of endocytosis, such as clathrin-mediated endocytosis or synaptic vesicle endocytosis as well as rapid endocytosis (RE). Associates to the membrane, through lipid binding, and self-assembles into rings and stacks of interconnected rings through oligomerization to form a helical polymer around the vesicle membrane leading to constriction of invaginated coated pits around their necks. Self-assembly of the helical polymer induces membrane tubules narrowing until the polymer reaches a length sufficient to trigger GTP hydrolysis. Depending on the curvature imposed on the tubules, membrane detachment from the helical polymer upon GTP hydrolysis can cause spontaneous hemifission followed by complete fission. May play a role in regulating early stages of clathrin-mediated endocytosis in non-neuronal cells through its activation by dephosphorylation via the signaling downstream of EGFR. Controls vesicle size at a step before fission, during formation of membrane pits, at hippocampal synapses. Controls plastic adaptation of the synaptic vesicle recycling machinery to high levels of activity. Mediates rapid endocytosis (RE), a Ca(2+)-dependent and clathrin- and K(+)-independent process in chromaffin cells. Microtubule-associated force-producing protein involved in producing microtubule bundles and able to bind and hydrolyze GTP. Through its interaction with DNAJC6, acts during the early steps of clathrin-coated vesicle (CCV) formation. This is Dynamin-1 (Dnm1) from Rattus norvegicus (Rat).